A 290-amino-acid polypeptide reads, in one-letter code: Ribosomal RNA small subunit methyltransferase A (290 aa).

6 residues coordinate S-adenosyl-L-methionine: N28, L30, G55, E76, D102, and N126.

It belongs to the class I-like SAM-binding methyltransferase superfamily. rRNA adenine N(6)-methyltransferase family. RsmA subfamily.

It is found in the cytoplasm. It catalyses the reaction adenosine(1518)/adenosine(1519) in 16S rRNA + 4 S-adenosyl-L-methionine = N(6)-dimethyladenosine(1518)/N(6)-dimethyladenosine(1519) in 16S rRNA + 4 S-adenosyl-L-homocysteine + 4 H(+). In terms of biological role, specifically dimethylates two adjacent adenosines (A1518 and A1519) in the loop of a conserved hairpin near the 3'-end of 16S rRNA in the 30S particle. May play a critical role in biogenesis of 30S subunits. The sequence is that of Ribosomal RNA small subunit methyltransferase A from Lachnoclostridium phytofermentans (strain ATCC 700394 / DSM 18823 / ISDg) (Clostridium phytofermentans).